The chain runs to 298 residues: Transcription factor RAX2 (298 aa).

2 consecutive HTH myb-type domains span residues 9 to 62 and 63 to 117; these read KANV…LNYL and RPNI…KKKL. 2 consecutive DNA-binding regions (H-T-H motif) follow at residues 38 to 62 and 90 to 113; these read WIAL…LNYL and WSVI…NTKL.

In terms of tissue distribution, ubiquitous, with higher levels in roots, flowers, and shoot tips. Found in all cells of the shoot tips.

Its subcellular location is the nucleus. In terms of biological role, transcription activator. Positively regulates axillary meristems (AMs) formation and development, especially during inflorescence. In Arabidopsis thaliana (Mouse-ear cress), this protein is Transcription factor RAX2 (RAX2).